We begin with the raw amino-acid sequence, 156 residues long: Small ribosomal subunit protein uS7 (156 aa).

The protein belongs to the universal ribosomal protein uS7 family. As to quaternary structure, part of the 30S ribosomal subunit. Contacts proteins S9 and S11.

Its function is as follows. One of the primary rRNA binding proteins, it binds directly to 16S rRNA where it nucleates assembly of the head domain of the 30S subunit. Is located at the subunit interface close to the decoding center, probably blocks exit of the E-site tRNA. This Solibacter usitatus (strain Ellin6076) protein is Small ribosomal subunit protein uS7.